A 510-amino-acid polypeptide reads, in one-letter code: ATP synthase subunit alpha (510 aa).

Glycine 169–threonine 176 serves as a coordination point for ATP.

The protein belongs to the ATPase alpha/beta chains family. F-type ATPases have 2 components, CF(1) - the catalytic core - and CF(0) - the membrane proton channel. CF(1) has five subunits: alpha(3), beta(3), gamma(1), delta(1), epsilon(1). CF(0) has three main subunits: a(1), b(2) and c(9-12). The alpha and beta chains form an alternating ring which encloses part of the gamma chain. CF(1) is attached to CF(0) by a central stalk formed by the gamma and epsilon chains, while a peripheral stalk is formed by the delta and b chains.

The protein resides in the cell inner membrane. It catalyses the reaction ATP + H2O + 4 H(+)(in) = ADP + phosphate + 5 H(+)(out). Its function is as follows. Produces ATP from ADP in the presence of a proton gradient across the membrane. The alpha chain is a regulatory subunit. The protein is ATP synthase subunit alpha of Rickettsia massiliae (strain Mtu5).